A 580-amino-acid polypeptide reads, in one-letter code: uncharacterized protein (580 aa).

The span at 1-44 shows a compositional bias: polar residues; that stretch reads MSESSVNADTPKNTNDVLNGAYQSATTEPEGQYRSATDNPSLYQ. The segment at 1 to 45 is disordered; the sequence is MSESSVNADTPKNTNDVLNGAYQSATTEPEGQYRSATDNPSLYQV. Residue Ser99 is modified to Phosphoserine. A run of 12 helical transmembrane segments spans residues 143 to 163, 177 to 197, 207 to 227, 235 to 255, 265 to 285, 295 to 315, 370 to 390, 405 to 425, 450 to 470, 476 to 496, 511 to 533, and 546 to 566; these read IYAYASLTIAWGSSVLSPASA, LLNVSLFMLGYCLGPICWAPM, LYIGLFLFSVFQIAVATAQDI, FFGGYGACVPLCVVAAAFADM, ITIFAAVIFVGPLVAPIVGGF, WTEYITSFMGFLSIILIYLFC, PIVFLVSLYCSFVYAIIYLLL, LGVSALPYIGILVGVFIGCGI, LPPMMIGSFLFPAGIFWLAWS, VHWIVPTLSGLLTGAGILLIF, AASVFAANVIMRSAVAGGFPLFA, and GSLLGFIATALIPMPFAFFFF.

This sequence belongs to the major facilitator superfamily. CAR1 family.

Its subcellular location is the membrane. This is an uncharacterized protein from Schizosaccharomyces pombe (strain 972 / ATCC 24843) (Fission yeast).